The primary structure comprises 196 residues: uncharacterized protein (196 aa).

This is an uncharacterized protein from Acanthamoeba polyphaga mimivirus (APMV).